Consider the following 459-residue polypeptide: V-type ATP synthase beta chain (459 aa).

This sequence belongs to the ATPase alpha/beta chains family.

Functionally, produces ATP from ADP in the presence of a proton gradient across the membrane. The V-type beta chain is a regulatory subunit. In Clostridium botulinum (strain Alaska E43 / Type E3), this protein is V-type ATP synthase beta chain.